The primary structure comprises 163 residues: MAFDFARATKYFLMWDFIKGFGLGMRYFVSPKPTLNYPHEKGPLSPRFRGEHALRRYPNGEERCIACKLCEAVCPAQAITIDAERREDGSRRTTRYDIDMTKCIYCGFCQEACPVDAIVEGPNFEYATETREELFYDKQKLLANGERWEAEIARNLQLDAPYR.

2 4Fe-4S ferredoxin-type domains span residues 54 to 84 (LRRYPNGEERCIACKLCEAVCPAQAITIDAE) and 94 to 123 (TRYDIDMTKCIYCGFCQEACPVDAIVEGPN). Residues Cys64, Cys67, Cys70, Cys74, Cys103, Cys106, Cys109, and Cys113 each contribute to the [4Fe-4S] cluster site.

Belongs to the complex I 23 kDa subunit family. In terms of assembly, NDH-1 is composed of at least 14 different subunits, Nqo1 to Nqo14. The complex has a L-shaped structure, with the hydrophobic arm (subunits Nqo7, Nqo8, Nqo10 to Nqo14) embedded in the inner membrane and the hydrophilic peripheral arm (subunits Nqo1 to Nqo6, Nqo9) protruding into the bacterial cytoplasm. The hydrophilic domain contains all the redox centers. [4Fe-4S] cluster serves as cofactor.

The protein resides in the cell inner membrane. The enzyme catalyses a quinone + NADH + 5 H(+)(in) = a quinol + NAD(+) + 4 H(+)(out). Its function is as follows. NDH-1 shuttles electrons from NADH, via FMN and iron-sulfur (Fe-S) centers, to quinones in the respiratory chain. The immediate electron acceptor for the enzyme in this species is believed to be ubiquinone. Couples the redox reaction to proton translocation (for every two electrons transferred, four hydrogen ions are translocated across the cytoplasmic membrane), and thus conserves the redox energy in a proton gradient. This Paracoccus denitrificans protein is NADH-quinone oxidoreductase subunit 9.